The sequence spans 1257 residues: LIM domain kinase 1 (1257 aa).

The tract at residues 1-24 (MHHQQRLRANGGRGGTGLGAGSGP) is disordered. The segment at 1–147 (MHHQQRLRAN…ERSKLYCGQC (147 aa)) is interaction with LATS1. The segment covering 11-24 (GGRGGTGLGAGSGP) has biased composition (gly residues). LIM zinc-binding domains lie at 31 to 93 (PLCA…RFGD) and 94 to 154 (ACQQ…RSCQ). One can recognise a PDZ domain in the interval 174 to 274 (LVEIPKDATP…MLQLTVEHDP (101 aa)). The 286-residue stretch at 401 to 686 (LVIGEKLGEG…PCFETLHVWL (286 aa)) folds into the Protein kinase domain. ATP is bound by residues 407–415 (LGEGFFGKV) and Lys430. The active site involves Asp522. Disordered stretches follow at residues 552–587 (LPSG…RQRR), 759–811 (QDIP…ERAL), and 881–900 (EELL…QHHR). Basic and acidic residues predominate over residues 794–811 (QEERRNLTPDTESKERAL). Position 1000 is a phosphoserine (Ser1000). Disordered stretches follow at residues 1010–1037 (AKQL…NPPL), 1085–1182 (SAQQ…EKVH), and 1212–1257 (AAGT…NTRC). Polar residues-rich tracts occupy residues 1085–1095 (SAQQQRTSSNH) and 1113–1125 (RTGS…SNCV). Low complexity-rich tracts occupy residues 1126–1137 (SPTRSSRPGSPT) and 1145–1166 (TAAT…HQQQ).

This sequence belongs to the protein kinase superfamily. TKL Ser/Thr protein kinase family. Interacts with LATS1, and this interaction inhibits phosphorylation of tsr/cofilin. In terms of processing, phosphorylated on serine and/or threonine residues by ROCK1. Phosphorylated by PAK4 resulting in increased LIMK1 ability to phosphorylate cofilin. May be dephosphorylated and inactivated by SSH1. In terms of tissue distribution, expressed throughout the imaginal disks of the eye, leg and wing.

It localises to the cytoplasm. The protein localises to the cleavage furrow. The protein resides in the midbody. The enzyme catalyses L-seryl-[protein] + ATP = O-phospho-L-seryl-[protein] + ADP + H(+). It carries out the reaction L-threonyl-[protein] + ATP = O-phospho-L-threonyl-[protein] + ADP + H(+). Protein kinase which regulates actin filament dynamics. Phosphorylates and inactivates the actin binding/depolymerizing factor tsr/cofilin, thereby stabilizing the actin cytoskeleton. Modulation of actin cytoskeleton dynamics may be essential for imaginal disk morphogenesis and axon guidance. This is LIM domain kinase 1 (LIMK1) from Drosophila melanogaster (Fruit fly).